Reading from the N-terminus, the 310-residue chain is tRNA-cytidine(32) 2-sulfurtransferase (310 aa).

A PP-loop motif motif is present at residues 47–52 (SGGKDS). Residues cysteine 122, cysteine 125, and cysteine 213 each coordinate [4Fe-4S] cluster.

Belongs to the TtcA family. Homodimer. Mg(2+) is required as a cofactor. Requires [4Fe-4S] cluster as cofactor.

The protein resides in the cytoplasm. The catalysed reaction is cytidine(32) in tRNA + S-sulfanyl-L-cysteinyl-[cysteine desulfurase] + AH2 + ATP = 2-thiocytidine(32) in tRNA + L-cysteinyl-[cysteine desulfurase] + A + AMP + diphosphate + H(+). Its pathway is tRNA modification. In terms of biological role, catalyzes the ATP-dependent 2-thiolation of cytidine in position 32 of tRNA, to form 2-thiocytidine (s(2)C32). The sulfur atoms are provided by the cysteine/cysteine desulfurase (IscS) system. This Haemophilus influenzae (strain 86-028NP) protein is tRNA-cytidine(32) 2-sulfurtransferase.